The chain runs to 97 residues: Large ribosomal subunit protein uL23 (97 aa).

The protein belongs to the universal ribosomal protein uL23 family. As to quaternary structure, part of the 50S ribosomal subunit. Contacts protein L29, and trigger factor when it is bound to the ribosome.

One of the early assembly proteins it binds 23S rRNA. One of the proteins that surrounds the polypeptide exit tunnel on the outside of the ribosome. Forms the main docking site for trigger factor binding to the ribosome. The polypeptide is Large ribosomal subunit protein uL23 (Brucella canis (strain ATCC 23365 / NCTC 10854 / RM-666)).